Reading from the N-terminus, the 220-residue chain is MRLVIARCSVDYIGRLKAHLPSAVRLLLVKADGSVSIHADGRAYKPLNWMSPPCVIAEEEGVWRVTNKAEEQLVISIEQILHDSTHELGVDPGLRKDGVEAHLQVLLADRPDAVREGLTLVRREYETGIGPVDLLCRDADGSTVAVEIKRKGEIDGVEQLTRYLSRLDDDPALPHPVRGILCAQSITPQARLLAADRGIACSVVDYDALRGLEPSIPTLF.

Belongs to the NucS endonuclease family.

The protein localises to the cytoplasm. In terms of biological role, cleaves both 3' and 5' ssDNA extremities of branched DNA structures. In Parafrankia sp. (strain EAN1pec), this protein is Endonuclease NucS.